A 181-amino-acid chain; its full sequence is ADP-ribosylation factor 1 (181 aa).

A lipid anchor (N-myristoyl glycine) is attached at Gly2. Residues 24–31 (GLDAAGKT), 67–71 (DVGGQ), and 126–129 (NKQD) each bind GTP.

The protein belongs to the small GTPase superfamily. Arf family. In terms of assembly, interacts with AGD7 and GDAP1. GDP-locked form interacts with cytosolic tail of p24 proteins. Interacts with AGD5 at trans-Golgi network. Interacts with A.tumefaciens AK6b.

The protein localises to the golgi apparatus. It localises to the endosome. The protein resides in the trans-Golgi network. It is found in the early endosome. The catalysed reaction is GTP + H2O = GDP + phosphate + H(+). Its activity is regulated as follows. Activated by AGD7 and AGD10. Functionally, GTP-binding protein involved in protein trafficking; required for the sequence-specific vacuolar sorting route to the lytic vacuole, for the ER-to-Golgi transport and for the Golgi-derived transport to the plasma membrane. Involved in the recruitment of COPI and GDAP1 to membranes. Required for recycling of PIN auxin transporters (e.g. PIN1 and PIN2) in a fungal toxin brefeldin A (BFA)-dependent manner. Involved in various auxin-dependent developmental processes. The chain is ADP-ribosylation factor 1 from Arabidopsis thaliana (Mouse-ear cress).